A 381-amino-acid polypeptide reads, in one-letter code: MNLYRDVLWPLLFSGLRADPEAVKMGLLRALHWIDATQATGILSALERLFCYRDPRLAVSLWGLTFPNPLGLAAGFDKDGLALGVWPSLGFGFVEVGTITPQPQPGNPKPRLFQLPQDRAALNRMGFNNQGAAALAERLRRLQQRPIPIGINLGKAKITPLEEAAADYLASFRLLQDLGDYFVVNVSSPNTPGLRSLQAAEQLEPILSALQRENQKRKPLLVKIAPDLDWPDIDSILELAQDHQLAGIVATNTTLRRDNLKTRFLPGRGIPFAPAESRPILAEAGGISGAPLRERSTQVIRYIHRSTQGKLPIIGVGGIFTLADALEKLEAGASLLQVYTGWVYEGPGMVPQLLRGLARSSPPSPDVTLPPENTPVGQIQA.

Residues 74–78 and Thr98 contribute to the FMN site; that span reads AGFDK. Lys78 provides a ligand contact to substrate. Position 123–127 (123–127) interacts with substrate; the sequence is NRMGF. Positions 152 and 185 each coordinate FMN. Asn185 contributes to the substrate binding site. Ser188 functions as the Nucleophile in the catalytic mechanism. Asn190 contacts substrate. Lys223 and Thr251 together coordinate FMN. Residue 252–253 coordinates substrate; sequence NT. FMN-binding positions include Gly289, Gly318, and 339–340; that span reads YT. The interval 359-381 is disordered; the sequence is RSSPPSPDVTLPPENTPVGQIQA.

It belongs to the dihydroorotate dehydrogenase family. Type 2 subfamily. Monomer. Requires FMN as cofactor.

The protein resides in the cell membrane. It carries out the reaction (S)-dihydroorotate + a quinone = orotate + a quinol. The protein operates within pyrimidine metabolism; UMP biosynthesis via de novo pathway; orotate from (S)-dihydroorotate (quinone route): step 1/1. In terms of biological role, catalyzes the conversion of dihydroorotate to orotate with quinone as electron acceptor. This chain is Dihydroorotate dehydrogenase (quinone), found in Synechococcus sp. (strain JA-2-3B'a(2-13)) (Cyanobacteria bacterium Yellowstone B-Prime).